The sequence spans 149 residues: 3-dehydroquinate dehydratase (149 aa).

Residue Tyr-22 is the Proton acceptor of the active site. Substrate-binding residues include Asn-74, His-80, and Asp-87. His-100 acts as the Proton donor in catalysis. Substrate is bound by residues 101–102 and Arg-111; that span reads LS.

It belongs to the type-II 3-dehydroquinase family. Homododecamer.

It catalyses the reaction 3-dehydroquinate = 3-dehydroshikimate + H2O. It functions in the pathway metabolic intermediate biosynthesis; chorismate biosynthesis; chorismate from D-erythrose 4-phosphate and phosphoenolpyruvate: step 3/7. Functionally, catalyzes a trans-dehydration via an enolate intermediate. The chain is 3-dehydroquinate dehydratase from Vesicomyosocius okutanii subsp. Calyptogena okutanii (strain HA).